Reading from the N-terminus, the 230-residue chain is Secretory carrier-associated membrane protein 4 (230 aa).

At 1 to 39 (MSGKENNFPPLPKFIPLKPCFYQNFSDEIPIEHQVLVKR) the chain is on the cytoplasmic side. 4 consecutive transmembrane segments (helical) span residues 40 to 60 (IYRLWLFYCATLGVNLVACLA), 61 to 81 (WWIAGGSGANFGLALLWLLLF), 105 to 125 (FMAFFFIFGAQFILTIIQAVG), and 149 to 169 (VVMLLPAIMFSMSAAMMAVMI). Residues 170–230 (MKVHSIYRGT…SYPASGGQWP (61 aa)) lie on the Cytoplasmic side of the membrane. At Thr194 the chain carries Phosphothreonine. The disordered stretch occupies residues 208–230 (FSGNSLPEYPTVPSYPASGGQWP).

The protein belongs to the SCAMP family.

Its subcellular location is the membrane. Its function is as follows. Probably involved in membrane protein trafficking. The polypeptide is Secretory carrier-associated membrane protein 4 (SCAMP4) (Bos taurus (Bovine)).